The sequence spans 765 residues: Zinc finger and BTB domain-containing protein 49 (765 aa).

The BTB domain occupies 25–91 (CDCMLVVKGV…MYTSHLDLNQ (67 aa)). Disordered stretches follow at residues 165–203 (QQNK…GSCT) and 275–294 (NFLA…DATC). 7 C2H2-type zinc fingers span residues 395-417 (YACE…KRSH), 423-445 (FECN…LRRH), 451-473 (YICE…IIIH), 479-501 (HLCD…KKTH), 507-529 (FTCD…RIRH), 535-557 (YSCS…VRTH), and 563-585 (YTCE…KKMH).

Belongs to the krueppel C2H2-type zinc-finger protein family. Isoform 1 interacts with EP300 and KAT5/Tip60. The interaction with EP300 is direct and leads to synergistic induction of CDKN1A. On the CDKN1A promoter, forms a complex with ZBTB17/Miz-1; this interaction leads to additive CDKN1A transactivation. Isoform 3 also interacts with ZBTB17; this interaction may block ZBTB17 repressor activity. In terms of tissue distribution, highly expressed in normal epidermis and in other epithelial tissues, including in colon and lung. Tends to be down-regulated in colon, lung and skin cancer tissues.

It localises to the cytoplasm. It is found in the nucleus. In terms of biological role, transcription factor. Inhibits cell proliferation by activating either CDKN1A/p21 transcription or RB1 transcription. Functionally, binds CDKN1A promoter and activates its transcription; this activity is further potentiated in the presence of EP300 (synergistic) and ZBTB17/Miz-1 (additive). Its function is as follows. Activates RB1 transcription most probably by antagonizing ZBTB17 repression of RB1. Does not bind directly RB1 promoter. The polypeptide is Zinc finger and BTB domain-containing protein 49 (ZBTB49) (Homo sapiens (Human)).